Reading from the N-terminus, the 533-residue chain is ATP synthase F(1) complex catalytic subunit beta, mitochondrial (533 aa).

Residues 1 to 53 (MLGLAGRCSAAAASAARPALRRAAGPSHGFLPLLLSRGAGPAAAVGARRDHAA) constitute a mitochondrion transit peptide. The ADP site is built by Gly214, Val215, Gly216, Lys217, Thr218, and Val219. ATP is bound at residue Gly214. Residues Gly214, Val215, Gly216, Lys217, and Thr218 each coordinate phosphate. Positions 216, 217, 218, and 219 each coordinate ATP. Thr218 contributes to the Mg(2+) binding site. Mg(2+) is bound at residue Glu243. Arg244 provides a ligand contact to ATP.

In terms of assembly, homotrimer. Component of the ATP synthase complex composed at least of ATP5F1A/subunit alpha, ATP5F1B/subunit beta, ATP5MC1/subunit c (homooctomer), MT-ATP6/subunit a, MT-ATP8/subunit 8, ATP5ME/subunit e, ATP5MF/subunit f, ATP5MG/subunit g, ATP5MK/subunit k, ATP5MJ/subunit j, ATP5F1C/subunit gamma, ATP5F1D/subunit delta, ATP5F1E/subunit epsilon, ATP5PF/subunit F6, ATP5PB/subunit b, ATP5PD/subunit d, ATP5PO/subunit OSCP. ATP synthase complex consists of a soluble F(1) head domain (subunits alpha(3) and beta(3)) - the catalytic core - and a membrane F(0) domain - the membrane proton channel (subunits c, a, 8, e, f, g, k and j). These two domains are linked by a central stalk (subunits gamma, delta, and epsilon) rotating inside the F1 region and a stationary peripheral stalk (subunits F6, b, d, and OSCP).

It is found in the mitochondrion inner membrane. The enzyme catalyses ATP + H2O + 4 H(+)(in) = ADP + phosphate + 5 H(+)(out). In terms of biological role, catalytic subunit beta, of the mitochondrial membrane ATP synthase complex (F(1)F(0) ATP synthase or Complex V) that produces ATP from ADP in the presence of a proton gradient across the membrane which is generated by electron transport complexes of the respiratory chain. ATP synthase complex consist of a soluble F(1) head domain - the catalytic core - and a membrane F(1) domain - the membrane proton channel. These two domains are linked by a central stalk rotating inside the F(1) region and a stationary peripheral stalk. During catalysis, ATP synthesis in the catalytic domain of F(1) is coupled via a rotary mechanism of the central stalk subunits to proton translocation. In vivo, can only synthesize ATP although its ATP hydrolase activity can be activated artificially in vitro. With the subunit alpha (ATP5F1A), forms the catalytic core in the F(1) domain. This Gallus gallus (Chicken) protein is ATP synthase F(1) complex catalytic subunit beta, mitochondrial.